Reading from the N-terminus, the 487-residue chain is Glutamyl-tRNA(Gln) amidotransferase subunit A (487 aa).

Catalysis depends on charge relay system residues Lys75 and Ser150. Residue Ser174 is the Acyl-ester intermediate of the active site.

This sequence belongs to the amidase family. GatA subfamily. In terms of assembly, heterotrimer of A, B and C subunits.

It carries out the reaction L-glutamyl-tRNA(Gln) + L-glutamine + ATP + H2O = L-glutaminyl-tRNA(Gln) + L-glutamate + ADP + phosphate + H(+). Its function is as follows. Allows the formation of correctly charged Gln-tRNA(Gln) through the transamidation of misacylated Glu-tRNA(Gln) in organisms which lack glutaminyl-tRNA synthetase. The reaction takes place in the presence of glutamine and ATP through an activated gamma-phospho-Glu-tRNA(Gln). This is Glutamyl-tRNA(Gln) amidotransferase subunit A from Deinococcus deserti (strain DSM 17065 / CIP 109153 / LMG 22923 / VCD115).